The primary structure comprises 473 residues: Photosystem II CP43 reaction center protein (473 aa).

Residues 1 to 14 constitute a propeptide that is removed on maturation; it reads MKTLYSLRRFYHVE. T15 carries the post-translational modification N-acetylthreonine. T15 bears the Phosphothreonine mark. The next 5 helical transmembrane spans lie at 69–93, 134–155, 178–200, 255–275, and 291–312; these read LFEV…PHLA, LLGP…KDRN, KALY…RKIT, KPFA…LSYS, and WFNN…ASQA. [CaMn4O5] cluster is bound at residue E367. Residues 447–471 form a helical membrane-spanning segment; sequence RARAAAAGFEKGIDRDFEPVLSMTP.

The protein belongs to the PsbB/PsbC family. PsbC subfamily. PSII is composed of 1 copy each of membrane proteins PsbA, PsbB, PsbC, PsbD, PsbE, PsbF, PsbH, PsbI, PsbJ, PsbK, PsbL, PsbM, PsbT, PsbX, PsbY, PsbZ, Psb30/Ycf12, at least 3 peripheral proteins of the oxygen-evolving complex and a large number of cofactors. It forms dimeric complexes. The cofactor is Binds multiple chlorophylls and provides some of the ligands for the Ca-4Mn-5O cluster of the oxygen-evolving complex. It may also provide a ligand for a Cl- that is required for oxygen evolution. PSII binds additional chlorophylls, carotenoids and specific lipids..

The protein resides in the plastid. It is found in the chloroplast thylakoid membrane. Its function is as follows. One of the components of the core complex of photosystem II (PSII). It binds chlorophyll and helps catalyze the primary light-induced photochemical processes of PSII. PSII is a light-driven water:plastoquinone oxidoreductase, using light energy to abstract electrons from H(2)O, generating O(2) and a proton gradient subsequently used for ATP formation. The protein is Photosystem II CP43 reaction center protein of Manihot esculenta (Cassava).